The sequence spans 336 residues: N6-methyladenosine RNA methyltransferase MTA1 (336 aa).

A disordered region spans residues 61 to 83 (LISSEPPHLPFKTPEPKAGSGGL).

Belongs to the MT-A70-like family.

It carries out the reaction an adenosine in mRNA + S-adenosyl-L-methionine = an N(6)-methyladenosine in mRNA + S-adenosyl-L-homocysteine + H(+). Functionally, N6-methyladenosine RNA methyltransferase that plays a crucial role in fungal phenotypic traits, virulence, and stress tolerance. Mediates the methylation of mRNAs to produce N6-methyladenosine (m6A)-containing mRNAs. M6A is a modification present at internal sites of mRNAs and some non-coding RNAs and plays a role in mRNA stability and processing. Mediates specifically acid phosphatase APHA mRNA stability through a YTHDF1-dependent m6A modification of the A1306, A1341, and A1666 key methylation modification sites. Also mediates the stability of the transcription factor ZAP1 mRNA via modification of residue A1935 localized in the 3'UTR. In Cryphonectria parasitica (strain ATCC 38755 / EP155), this protein is N6-methyladenosine RNA methyltransferase MTA1.